A 121-amino-acid chain; its full sequence is Small ribosomal subunit protein bS6 (121 aa).

It belongs to the bacterial ribosomal protein bS6 family.

Its function is as follows. Binds together with bS18 to 16S ribosomal RNA. The chain is Small ribosomal subunit protein bS6 from Rickettsia felis (strain ATCC VR-1525 / URRWXCal2) (Rickettsia azadi).